Reading from the N-terminus, the 309-residue chain is Malate dehydrogenase (309 aa).

Residues 8–13 (GAGLVG) and Asp-33 contribute to the NAD(+) site. Arg-82 and Arg-88 together coordinate substrate. Residues Asn-95 and 118 to 120 (VSN) each bind NAD(+). Residues Asn-120 and Arg-151 each coordinate substrate. His-175 functions as the Proton acceptor in the catalytic mechanism.

The protein belongs to the LDH/MDH superfamily. MDH type 3 family.

The enzyme catalyses (S)-malate + NAD(+) = oxaloacetate + NADH + H(+). Catalyzes the reversible oxidation of malate to oxaloacetate. This is Malate dehydrogenase from Pseudomonas putida (strain ATCC 700007 / DSM 6899 / JCM 31910 / BCRC 17059 / LMG 24140 / F1).